The following is a 121-amino-acid chain: Large ribosomal subunit protein bL19 (121 aa).

The protein belongs to the bacterial ribosomal protein bL19 family.

Functionally, this protein is located at the 30S-50S ribosomal subunit interface and may play a role in the structure and function of the aminoacyl-tRNA binding site. This chain is Large ribosomal subunit protein bL19, found in Bifidobacterium adolescentis (strain ATCC 15703 / DSM 20083 / NCTC 11814 / E194a).